Here is a 346-residue protein sequence, read N- to C-terminus: Cyclic GMP-AMP synthase-like protein (346 aa).

ATP is bound by residues Ser-58 and Glu-70–Asp-72. Mg(2+) contacts are provided by Glu-70, Asp-72, and Asp-165. GTP-binding positions include Asp-165 and Met-212–Glu-219. ATP contacts are provided by residues Pro-216 to Glu-219, Lys-237, and Ser-252 to Lys-256.

The protein belongs to the mab-21 family. Requires Mg(2+) as cofactor. The cofactor is Mn(2+).

With respect to regulation, activated in response of some unknown stimulus. Not activated in response to L-monocytogenes infection. Its function is as follows. Probable nucleotidyltransferase that catalyzes the formation of cyclic dinucleotide second messenger in response to some unknown stimulus. Does not catalyze the formation of cyclic GMP-AMP from ATP and GTP. The chain is Cyclic GMP-AMP synthase-like protein from Drosophila melanogaster (Fruit fly).